The sequence spans 131 residues: Small ribosomal subunit protein uS11 (131 aa).

Belongs to the universal ribosomal protein uS11 family. In terms of assembly, part of the 30S ribosomal subunit. Interacts with proteins S7 and S18. Binds to IF-3.

Functionally, located on the platform of the 30S subunit, it bridges several disparate RNA helices of the 16S rRNA. Forms part of the Shine-Dalgarno cleft in the 70S ribosome. The polypeptide is Small ribosomal subunit protein uS11 (Helicobacter pylori (strain G27)).